Consider the following 646-residue polypeptide: Zinc finger protein 503 (646 aa).

Polar residues predominate over residues 1 to 11 (MSTAPSLSALR). A disordered region spans residues 1-70 (MSTAPSLSAL…PPSDPLRQAN (70 aa)). Positions 16–28 (SGGGGGGGGGGGA) are enriched in gly residues. The span at 34–52 (SALSGNSSGPGPGSSPAGS) shows a compositional bias: low complexity. S102 is subject to Phosphoserine. Residues 121–332 (SQIGKPDPSP…PSAPTSSSVL (212 aa)) are disordered. Residues 130-139 (PSSKLSSVAS) are compositionally biased toward low complexity. 2 stretches are compositionally biased toward gly residues: residues 140 to 152 (NGGG…GGAA) and 189 to 205 (GGGG…GGGV). N6-acetyllysine is present on K209. Residues 217-226 (ATCQPFTPRT) are compositionally biased toward polar residues. Positions 227 to 240 (GSPSSSASACSPGG) are enriched in low complexity. Residues S231 and S237 each carry the phosphoserine modification. Positions 250-259 (EGKDDKKDTD) are enriched in basic and acidic residues. 2 stretches are compositionally biased toward gly residues: residues 260–277 (VGGG…GGPT) and 300–315 (GGPG…GGSS). The segment covering 316 to 330 (GSSSGSGPSAPTSSS) has biased composition (low complexity). The segment at 514–542 (HICNWVSANGPCDKRFATSEELLSHLRTH) adopts a C2H2-type zinc-finger fold. An Omega-N-methylarginine modification is found at R636.

It belongs to the Elbow/Noc family.

Its subcellular location is the nucleus. Its function is as follows. May function as a transcriptional repressor. This Homo sapiens (Human) protein is Zinc finger protein 503 (ZNF503).